We begin with the raw amino-acid sequence, 363 residues long: tRNA(Met) cytidine acetate ligase (363 aa).

ATP is bound by residues 7–20, Gly-96, Asn-152, and Arg-175; that span reads IAEYNPFHTGHKYL.

Belongs to the TmcAL family.

The protein resides in the cytoplasm. The enzyme catalyses cytidine(34) in elongator tRNA(Met) + acetate + ATP = N(4)-acetylcytidine(34) in elongator tRNA(Met) + AMP + diphosphate. In terms of biological role, catalyzes the formation of N(4)-acetylcytidine (ac(4)C) at the wobble position of elongator tRNA(Met), using acetate and ATP as substrates. First activates an acetate ion to form acetyladenylate (Ac-AMP) and then transfers the acetyl group to tRNA to form ac(4)C34. The protein is tRNA(Met) cytidine acetate ligase of Streptococcus suis (strain 98HAH33).